Consider the following 344-residue polypeptide: L-rhamnose-proton symporter (344 aa).

The next 10 helical transmembrane spans lie at Ile-5–Pro-25, Trp-38–Leu-58, Ile-72–Leu-92, Met-101–Ile-121, Thr-137–Leu-157, Leu-175–Ala-195, Leu-214–Ile-234, Ile-259–Gly-279, Phe-289–Leu-309, and Val-323–Ala-343.

Belongs to the L-rhamnose transporter (TC 2.A.7.6) family.

Its subcellular location is the cell inner membrane. It carries out the reaction L-rhamnopyranose(in) + H(+)(in) = L-rhamnopyranose(out) + H(+)(out). Uptake of L-rhamnose across the cytoplasmic membrane with the concomitant transport of protons into the cell (symport system). The chain is L-rhamnose-proton symporter from Mannheimia succiniciproducens (strain KCTC 0769BP / MBEL55E).